We begin with the raw amino-acid sequence, 215 residues long: Golgi-associated RAB2 interactor protein 5A (215 aa).

Disordered stretches follow at residues 1 to 20 (MKRG…AGPG) and 174 to 215 (QDYS…LWGL). Positions 178–191 (ALEDDEDDDEDEDR) are enriched in acidic residues.

Belongs to the GARIN family. As to quaternary structure, interacts (via N-terminus) with RAB2B (in GTP-bound form).

It is found in the golgi apparatus. Its function is as follows. RAB2B effector protein which promotes cytosolic DNA-induced innate immune responses. Regulates IFN responses against DNA viruses by regulating the CGAS-STING signaling axis. The protein is Golgi-associated RAB2 interactor protein 5A (GARIN5A) of Bos taurus (Bovine).